A 687-amino-acid polypeptide reads, in one-letter code: Glycine--tRNA ligase beta subunit (687 aa).

It belongs to the class-II aminoacyl-tRNA synthetase family. In terms of assembly, tetramer of two alpha and two beta subunits.

The protein localises to the cytoplasm. The enzyme catalyses tRNA(Gly) + glycine + ATP = glycyl-tRNA(Gly) + AMP + diphosphate. This Neisseria meningitidis serogroup A / serotype 4A (strain DSM 15465 / Z2491) protein is Glycine--tRNA ligase beta subunit.